We begin with the raw amino-acid sequence, 179 residues long: ATP-dependent protease subunit HslV (179 aa).

Threonine 7 is an active-site residue. Na(+) contacts are provided by glycine 162, cysteine 165, and threonine 168.

Belongs to the peptidase T1B family. HslV subfamily. A double ring-shaped homohexamer of HslV is capped on each side by a ring-shaped HslU homohexamer. The assembly of the HslU/HslV complex is dependent on binding of ATP.

The protein resides in the cytoplasm. The enzyme catalyses ATP-dependent cleavage of peptide bonds with broad specificity.. With respect to regulation, allosterically activated by HslU binding. In terms of biological role, protease subunit of a proteasome-like degradation complex believed to be a general protein degrading machinery. The sequence is that of ATP-dependent protease subunit HslV from Bordetella avium (strain 197N).